The sequence spans 688 residues: Collagen alpha-2(IX) chain (688 aa).

An N-terminal signal peptide occupies residues 1 to 22; it reads MTAVPAPRSLFVLLQVLWLALA. The triple-helical region 4 (COL4) stretch occupies residues 26–162; that stretch reads GPPGEPGPPG…PGKPGRPGTI (137 aa). The segment at 26-171 is disordered; it reads GPPGEPGPPG…IQGLEGSADF (146 aa). 2 stretches are compositionally biased toward pro residues: residues 28–42 and 105–126; these read PGEP…PPGV and LPGP…PGPV. Residues 128–137 are compositionally biased toward low complexity; that stretch reads LPGEIGTPGP. A compositionally biased stretch (pro residues) spans 138-156; it reads KGDPGPEGPSGPPGPPGKP. Proline 159 is subject to 4-hydroxyproline. Residues 163–179 are nonhelical region 4 (NC4); the sequence is QGLEGSADFLCPTNCPA. A glycan (O-linked (Xyl...) (glycosaminoglycan) serine) is linked at serine 168. Positions 180–518 are triple-helical region 3 (COL3); the sequence is GVKGPQGLQG…PGRQGVVGRA (339 aa). Residue lysine 182 is modified to 5-hydroxylysine. O-linked (Gal...) hydroxylysine glycosylation occurs at lysine 182. Residues 183–517 are disordered; the sequence is GPQGLQGVKG…QPGRQGVVGR (335 aa). 2 stretches are compositionally biased toward low complexity: residues 289 to 314 and 392 to 412; these read PQGI…PGIP and RGPV…EQGP. Over residues 435-444 the composition is skewed to gly residues; the sequence is GPRGGVGDPG. Over residues 502–517 the composition is skewed to low complexity; sequence DRGVPGQPGRQGVVGR. Positions 519–548 are nonhelical region 3 (NC3); the sequence is ASDQHIVDVVLKMIQEQLAEVAVSAKREAL. The triple-helical region 2 (COL2) stretch occupies residues 549–631; that stretch reads GAAGMVGLPG…PGLPGRPGQA (83 aa). Residues 553 to 664 are disordered; sequence MVGLPGPPGP…GPVGLPGFCE (112 aa). A compositionally biased stretch (basic and acidic residues) spans 598–610; it reads KRGEKGDRGEMGH. Residues 632–633 are nonhelical region 2 (NC2); it reads IN. Residues 634-663 are triple-helical region 1 (COL1); that stretch reads GKDGDRGSPGAPGEAGRPGRPGPVGLPGFC. The tract at residues 664–688 is nonhelical region 1 (NC1); the sequence is EPAACLGASAYTSARLTEPGSIKGP.

It belongs to the fibril-associated collagens with interrupted helices (FACIT) family. Heterotrimer of an alpha 1(IX), an alpha 2(IX) and an alpha 3(IX) chain. The chains are linked to each other by interchain disulfide bonds. Trimers are also cross-linked via hydroxylysines. Covalently linked to the telopeptides of type II collagen by lysine-derived cross-links. Post-translationally, prolines at the third position of the tripeptide repeating unit (G-X-Y) are hydroxylated in some or all of the chains.

Its subcellular location is the secreted. It is found in the extracellular space. It localises to the extracellular matrix. In terms of biological role, structural component of hyaline cartilage and vitreous of the eye. This is Collagen alpha-2(IX) chain (Col9a2) from Mus musculus (Mouse).